Reading from the N-terminus, the 190-residue chain is MDLLGCVLVSETPEGTCSGVIVETEAYRPEDPACHAYRGPSMRNRTLFGGPGLAYVYLSYGMHRLLNAVCEGEGVGSAVLIRSLAPLEGVPLMRRRRGRAADLCNGPGRLAESLGVGLSLDGHDLTLGEGLYIAPGPPPRGEIVSTTRIGVSRGAELPWRYLVLGERVSVPPRRISGRGLRRAWNVREPA.

The protein belongs to the DNA glycosylase MPG family.

The protein is Putative 3-methyladenine DNA glycosylase of Rubrobacter xylanophilus (strain DSM 9941 / JCM 11954 / NBRC 16129 / PRD-1).